A 21-amino-acid polypeptide reads, in one-letter code: Putative NADH dehydrogenase subunit PS9 (21 aa).

This Pinus strobus (Eastern white pine) protein is Putative NADH dehydrogenase subunit PS9.